Consider the following 307-residue polypeptide: Coproporphyrin III ferrochelatase (307 aa).

Fe-coproporphyrin III-binding positions include Tyr-12, Arg-29, 45–46 (RY), Ser-53, and Tyr-124. His-181 and Glu-263 together coordinate Fe(2+).

It belongs to the ferrochelatase family.

It is found in the cytoplasm. It catalyses the reaction Fe-coproporphyrin III + 2 H(+) = coproporphyrin III + Fe(2+). It participates in porphyrin-containing compound metabolism; protoheme biosynthesis. Functionally, involved in coproporphyrin-dependent heme b biosynthesis. Catalyzes the insertion of ferrous iron into coproporphyrin III to form Fe-coproporphyrin III. The protein is Coproporphyrin III ferrochelatase of Staphylococcus saprophyticus subsp. saprophyticus (strain ATCC 15305 / DSM 20229 / NCIMB 8711 / NCTC 7292 / S-41).